Here is a 173-residue protein sequence, read N- to C-terminus: Peptide methionine sulfoxide reductase MsrA (173 aa).

Residue cysteine 10 is part of the active site.

This sequence belongs to the MsrA Met sulfoxide reductase family.

It carries out the reaction L-methionyl-[protein] + [thioredoxin]-disulfide + H2O = L-methionyl-(S)-S-oxide-[protein] + [thioredoxin]-dithiol. It catalyses the reaction [thioredoxin]-disulfide + L-methionine + H2O = L-methionine (S)-S-oxide + [thioredoxin]-dithiol. Its function is as follows. Has an important function as a repair enzyme for proteins that have been inactivated by oxidation. Catalyzes the reversible oxidation-reduction of methionine sulfoxide in proteins to methionine. The chain is Peptide methionine sulfoxide reductase MsrA from Psychrobacter arcticus (strain DSM 17307 / VKM B-2377 / 273-4).